The primary structure comprises 135 residues: MLNLRIMAPNRIVWNSDIQEIILSTNSGQIGILPNHASVLTALDIGIVKIRLNDQWSTMALMGGFAMIDNNNLTILVNDAEKASEIDYQEAQETFQKAKTNLEEAEGNKKKEIEALLVFKRAKARLEAINMASKL.

The protein belongs to the ATPase epsilon chain family. F-type ATPases have 2 components, CF(1) - the catalytic core - and CF(0) - the membrane proton channel. CF(1) has five subunits: alpha(3), beta(3), gamma(1), delta(1), epsilon(1). CF(0) has three main subunits: a, b and c.

It is found in the plastid. The protein localises to the chloroplast thylakoid membrane. Its function is as follows. Produces ATP from ADP in the presence of a proton gradient across the membrane. The chain is ATP synthase epsilon chain, chloroplastic from Marchantia polymorpha (Common liverwort).